The chain runs to 787 residues: MISTRLARAGALAPKSRLFLGTRAFATVGDSPLDKKVEMANTEKGNYINYKKMSENLDIVRRRLQRPLTYAEKVLYSHLDDPHGQEIERGKSYLKLRPDRVACQDATAQMAILQFMSAGMPSVATPTTVHCDHLIEAQVGGDKDLARANEINKEVYDFLASATAKYNIGFWKPGSGIIHQIVLENYAFPGGLMIGTDSHTPNAGGLAMAAIGVGGADAVDVMAGLPWELKAPKVIGVKLTGEMSGWTTPKDVILKVAGLLTVKGGTGAIIEYHGPGVTSLSCTGMGTICNMGAEIGATTSMFPFNDRMYDYLKATKRQHIGDFAREYAKELREDEGAEYDQLIEINLSELEPHINGPFTPDLATPISKFKEAVETNKWPEELKVGLIGSCTNSSYEDMSRAASIARDALNHGLKAKSLFTVTPGSEQIRATIERDGQLQTLEEFGGVILANACGPCIGQWDRRDVKKGEPNSIISSYNRNFTGRNDANPATHAFVASPDLVVAMTIAGTLKFNPLTDKLKDKDGNEFLLQPPTGEGLPAKGYDPGRDTYQAPPADRSSVNVAVSPTSDRLQLLAGFEPWDGKDANGIPILIKCQGKTTTDHISMAGPWLKYRGHLDNISNNMLIGAVNAENGKANSVKNKFTGEYDAVPATARDYKARGVKWVVIGDWNYGEGSSREHAALEPRHLGGLAIITRSFARIHETNLKKQGMLPLTFADPADYDKINPEDTVDLLCTQLEVGKPMTLRVHPKDGSAPFDISLNHTFNESQIEWFKDGSALNTMARKSGAK.

Residues 1–33 (MISTRLARAGALAPKSRLFLGTRAFATVGDSPL) constitute a mitochondrion transit peptide. Residues Gln-104 and 197–199 (DSH) each bind substrate. Cys-390, Cys-453, and Cys-456 together coordinate [4Fe-4S] cluster. Substrate contacts are provided by Arg-479 and Arg-484. The interval 529–559 (LQPPTGEGLPAKGYDPGRDTYQAPPADRSSV) is disordered. Substrate-binding positions include Arg-612 and 675–676 (SR).

It belongs to the aconitase/IPM isomerase family. It depends on [4Fe-4S] cluster as a cofactor.

The protein localises to the mitochondrion. The catalysed reaction is citrate = D-threo-isocitrate. It carries out the reaction (2R)-homocitrate = cis-homoaconitate + H2O. It functions in the pathway carbohydrate metabolism; tricarboxylic acid cycle; isocitrate from oxaloacetate: step 2/2. The protein operates within amino-acid biosynthesis; L-lysine biosynthesis via AAA pathway; L-alpha-aminoadipate from 2-oxoglutarate: step 2/5. Its function is as follows. Catalyzes the isomerization of citrate to isocitrate via cis-aconitate, a step in the citric acid cycle. Also catalyzes the reversible dehydration of (R)-homocitrate to cis-homoaconitate, a step in the alpha-aminoadipate pathway for lysine biosynthesis. This Aspergillus fumigatus (strain ATCC MYA-4609 / CBS 101355 / FGSC A1100 / Af293) (Neosartorya fumigata) protein is Aconitate hydratase, mitochondrial (acoA).